A 360-amino-acid polypeptide reads, in one-letter code: Phospho-N-acetylmuramoyl-pentapeptide-transferase (360 aa).

10 helical membrane-spanning segments follow: residues 21-41 (YITV…LWIG), 73-93 (TMGG…WANL), 94-114 (ANSY…IGFV), 132-152 (WKYF…YWLG), 168-188 (IMPQ…VGTG), 199-219 (GLAI…AWAT), 239-259 (VVVF…FNTY), 263-283 (VFMG…VAIL), 288-308 (FLLV…ILQV), and 338-358 (VIIR…VTLK).

The protein belongs to the glycosyltransferase 4 family. MraY subfamily. Requires Mg(2+) as cofactor.

It localises to the cell inner membrane. The catalysed reaction is UDP-N-acetyl-alpha-D-muramoyl-L-alanyl-gamma-D-glutamyl-meso-2,6-diaminopimeloyl-D-alanyl-D-alanine + di-trans,octa-cis-undecaprenyl phosphate = di-trans,octa-cis-undecaprenyl diphospho-N-acetyl-alpha-D-muramoyl-L-alanyl-D-glutamyl-meso-2,6-diaminopimeloyl-D-alanyl-D-alanine + UMP. Its pathway is cell wall biogenesis; peptidoglycan biosynthesis. Catalyzes the initial step of the lipid cycle reactions in the biosynthesis of the cell wall peptidoglycan: transfers peptidoglycan precursor phospho-MurNAc-pentapeptide from UDP-MurNAc-pentapeptide onto the lipid carrier undecaprenyl phosphate, yielding undecaprenyl-pyrophosphoryl-MurNAc-pentapeptide, known as lipid I. This Haemophilus influenzae (strain 86-028NP) protein is Phospho-N-acetylmuramoyl-pentapeptide-transferase.